The chain runs to 442 residues: Trigger factor (442 aa).

The region spanning 176-259 is the PPIase FKBP-type domain; sequence GDFISLSLYV…VNAVIEISSP (84 aa).

The protein belongs to the FKBP-type PPIase family. Tig subfamily.

Its subcellular location is the cytoplasm. It catalyses the reaction [protein]-peptidylproline (omega=180) = [protein]-peptidylproline (omega=0). Involved in protein export. Acts as a chaperone by maintaining the newly synthesized protein in an open conformation. Functions as a peptidyl-prolyl cis-trans isomerase. This chain is Trigger factor, found in Chlamydia trachomatis serovar A (strain ATCC VR-571B / DSM 19440 / HAR-13).